We begin with the raw amino-acid sequence, 238 residues long: MSSRSYKRVLLKLSGEALMGEDAFGINRSTIVRMTDEIAEVAALGVELAIVIGGGNIFRGVAPGAQGMDRATADYMGMMATIMNALALQDALKHKGVDTRVQSALNIDQVVEPYIRPKALRYLEEGKVVIFAAGTGNPFFTTDTAAALRGAEIGAEIVLKATKVDGIYSADPNKDPTATRYARISFDEVIVRRLEVMDATAFALCRDQKLPIKVFSINKSGALKRAVSGEDEGTLVHV.

12 to 15 is a binding site for ATP; that stretch reads KLSG. Gly-54 is a UMP binding site. Gly-55 and Arg-59 together coordinate ATP. UMP contacts are provided by residues Asp-74 and 135–142; that span reads TGNPFFTT. 3 residues coordinate ATP: Thr-162, Tyr-168, and Asp-171.

Belongs to the UMP kinase family. As to quaternary structure, homohexamer.

The protein localises to the cytoplasm. It catalyses the reaction UMP + ATP = UDP + ADP. It functions in the pathway pyrimidine metabolism; CTP biosynthesis via de novo pathway; UDP from UMP (UMPK route): step 1/1. With respect to regulation, inhibited by UTP. Functionally, catalyzes the reversible phosphorylation of UMP to UDP. This chain is Uridylate kinase, found in Bordetella pertussis (strain Tohama I / ATCC BAA-589 / NCTC 13251).